Consider the following 381-residue polypeptide: Translation initiation factor eIF2B subunit beta (381 aa).

Residues 125 to 148 are disordered; it reads LQKPEQPHQNRKNSSGSSSMKTKT. A compositionally biased stretch (polar residues) spans 136–145; the sequence is KNSSGSSSMK.

The protein belongs to the eIF-2B alpha/beta/delta subunits family. As to quaternary structure, component of the translation initiation factor 2B (eIF2B) complex which is a heterodecamer of two sets of five different subunits: alpha, beta, gamma, delta and epsilon. Subunits alpha, beta and delta comprise a regulatory subcomplex and subunits epsilon and gamma comprise a catalytic subcomplex. Within the complex, the hexameric regulatory complex resides at the center, with the two heterodimeric catalytic subcomplexes bound on opposite sides.

It is found in the cytoplasm. It localises to the cytosol. In terms of biological role, acts as a component of the translation initiation factor 2B (eIF2B) complex, which catalyzes the exchange of GDP for GTP on the eukaryotic initiation factor 2 (eIF2) complex gamma subunit. Its guanine nucleotide exchange factor activity is repressed when bound to eIF2 complex phosphorylated on the alpha subunit, thereby limiting the amount of methionyl-initiator methionine tRNA available to the ribosome and consequently global translation is repressed. It activates the synthesis of GCN4 in yeast under amino acid starvation conditions by suppressing the inhibitory effects of multiple AUG codons present in the leader of GCN4 mRNA. It may promote either repression or activation of GCN4 expression depending on amino acid availability. GCD6 and GCD7 repress GCN4 expression at the translational level by ensuring that ribosomes which have translated UORF1 will reinitiate at UORF2, -3, or -4 and thus fail to reach the GCN4 start site. In Saccharomyces cerevisiae (strain ATCC 204508 / S288c) (Baker's yeast), this protein is Translation initiation factor eIF2B subunit beta (GCD7).